Reading from the N-terminus, the 55-residue chain is Large ribosomal subunit protein bL33 (55 aa).

It belongs to the bacterial ribosomal protein bL33 family.

In Edwardsiella ictaluri (strain 93-146), this protein is Large ribosomal subunit protein bL33.